The following is a 216-amino-acid chain: Adenylate kinase (216 aa).

10 to 15 (GAGKGT) provides a ligand contact to ATP. An NMP region spans residues 30 to 59 (STGDIFRANIKEKTPLGIEAKRYIDNGQLV). Residues T31, R36, 57-59 (QLV), 85-88 (GFPR), and Q92 each bind AMP. The segment at 126 to 163 (GRRVCTSCGASYHIRFNPPKIEGKCDICDNELIQRKDD) is LID. Position 127 (R127) interacts with ATP. Positions 130 and 133 each coordinate Zn(2+). 136 to 137 (SY) contacts ATP. Positions 150 and 153 each coordinate Zn(2+). The AMP site is built by R160 and R171. E199 lines the ATP pocket.

Belongs to the adenylate kinase family. As to quaternary structure, monomer.

It is found in the cytoplasm. The catalysed reaction is AMP + ATP = 2 ADP. It functions in the pathway purine metabolism; AMP biosynthesis via salvage pathway; AMP from ADP: step 1/1. In terms of biological role, catalyzes the reversible transfer of the terminal phosphate group between ATP and AMP. Plays an important role in cellular energy homeostasis and in adenine nucleotide metabolism. The sequence is that of Adenylate kinase from Clostridium botulinum (strain 657 / Type Ba4).